Consider the following 328-residue polypeptide: D-cysteine desulfhydrase (328 aa).

An N6-(pyridoxal phosphate)lysine modification is found at lysine 51.

It belongs to the ACC deaminase/D-cysteine desulfhydrase family. As to quaternary structure, homodimer. It depends on pyridoxal 5'-phosphate as a cofactor.

The enzyme catalyses D-cysteine + H2O = hydrogen sulfide + pyruvate + NH4(+) + H(+). Catalyzes the alpha,beta-elimination reaction of D-cysteine and of several D-cysteine derivatives. It could be a defense mechanism against D-cysteine. In Salmonella typhimurium (strain LT2 / SGSC1412 / ATCC 700720), this protein is D-cysteine desulfhydrase.